Consider the following 225-residue polypeptide: Small ribosomal subunit protein uS3 (225 aa).

Positions Leu-38 to Arg-106 constitute a KH type-2 domain.

This sequence belongs to the universal ribosomal protein uS3 family. Part of the 30S ribosomal subunit. Forms a tight complex with proteins S10 and S14.

Its function is as follows. Binds the lower part of the 30S subunit head. Binds mRNA in the 70S ribosome, positioning it for translation. This is Small ribosomal subunit protein uS3 from Gluconacetobacter diazotrophicus (strain ATCC 49037 / DSM 5601 / CCUG 37298 / CIP 103539 / LMG 7603 / PAl5).